The chain runs to 491 residues: Acetyl-coenzyme A carboxylase carboxyl transferase subunit beta, chloroplastic (491 aa).

A disordered region spans residues A26–G49. Residues G32–S41 show a composition bias toward polar residues. Residues L222–R491 enclose the CoA carboxyltransferase N-terminal domain. C226, C229, C245, and C248 together coordinate Zn(2+). The C4-type zinc finger occupies C226–C248.

The protein belongs to the AccD/PCCB family. As to quaternary structure, acetyl-CoA carboxylase is a heterohexamer composed of biotin carboxyl carrier protein, biotin carboxylase and 2 subunits each of ACCase subunit alpha and ACCase plastid-coded subunit beta (accD). It depends on Zn(2+) as a cofactor.

The protein resides in the plastid. The protein localises to the chloroplast stroma. It carries out the reaction N(6)-carboxybiotinyl-L-lysyl-[protein] + acetyl-CoA = N(6)-biotinyl-L-lysyl-[protein] + malonyl-CoA. Its pathway is lipid metabolism; malonyl-CoA biosynthesis; malonyl-CoA from acetyl-CoA: step 1/1. Functionally, component of the acetyl coenzyme A carboxylase (ACC) complex. Biotin carboxylase (BC) catalyzes the carboxylation of biotin on its carrier protein (BCCP) and then the CO(2) group is transferred by the transcarboxylase to acetyl-CoA to form malonyl-CoA. This chain is Acetyl-coenzyme A carboxylase carboxyl transferase subunit beta, chloroplastic, found in Ceratophyllum demersum (Rigid hornwort).